Here is a 599-residue protein sequence, read N- to C-terminus: NADH-quinone oxidoreductase subunit C/D (599 aa).

Positions M1–E189 are NADH dehydrogenase I subunit C. The NADH dehydrogenase I subunit D stretch occupies residues D213–R599.

The protein in the N-terminal section; belongs to the complex I 30 kDa subunit family. In the C-terminal section; belongs to the complex I 49 kDa subunit family. In terms of assembly, NDH-1 is composed of 13 different subunits. Subunits NuoB, CD, E, F, and G constitute the peripheral sector of the complex.

The protein resides in the cell inner membrane. The enzyme catalyses a quinone + NADH + 5 H(+)(in) = a quinol + NAD(+) + 4 H(+)(out). Its function is as follows. NDH-1 shuttles electrons from NADH, via FMN and iron-sulfur (Fe-S) centers, to quinones in the respiratory chain. The immediate electron acceptor for the enzyme in this species is believed to be ubiquinone. Couples the redox reaction to proton translocation (for every two electrons transferred, four hydrogen ions are translocated across the cytoplasmic membrane), and thus conserves the redox energy in a proton gradient. This chain is NADH-quinone oxidoreductase subunit C/D, found in Pectobacterium carotovorum subsp. carotovorum (strain PC1).